We begin with the raw amino-acid sequence, 469 residues long: MGKTLYQKIYDAHVVREVANETPIIYIDRHLVHEVTSPQAFDGLRTKGRAVRQPNKTFATMDHNVSTQTKDINACGDMARIQMQELMKNCQEFGVTLYDLNHPYQGIVHVMGPEQGLTLPGMTIVCGDSHTATHGAFGALAFGIGTSEVEHVLATQTLKQSRAKTLKIEVQGKTANGITAKDIVLAIIGKLGSAGGTGYIIEFTGEAIEALSMEGRMTLCNMAIEMGAKAGLVAPDETTFAYLKGRQFAPQAPLWDEAVAYWKTLKSDEDAIFDATVTINAAEIAPQVTWGTNPGQVIAIDQIVPRLNSFNDPVERASAEKALAYMGLTEGVNLTDITIDKVFIGSCTNSRIEDLRAAAKIAKGHKVASHVQAIVVPGSGPVKAQAEAEGLDKIFIEAGFEWRLPGCSMCLAMNNDRLNPGERCASTSNRNFEGRQGRGGRTHLVSPAMAAAAAIHGHFADIRTFATVS.

[4Fe-4S] cluster is bound by residues C347, C407, and C410.

Belongs to the aconitase/IPM isomerase family. LeuC type 1 subfamily. As to quaternary structure, heterodimer of LeuC and LeuD. [4Fe-4S] cluster is required as a cofactor.

The catalysed reaction is (2R,3S)-3-isopropylmalate = (2S)-2-isopropylmalate. It participates in amino-acid biosynthesis; L-leucine biosynthesis; L-leucine from 3-methyl-2-oxobutanoate: step 2/4. Its function is as follows. Catalyzes the isomerization between 2-isopropylmalate and 3-isopropylmalate, via the formation of 2-isopropylmaleate. This is 3-isopropylmalate dehydratase large subunit from Proteus mirabilis (strain HI4320).